Consider the following 99-residue polypeptide: DNA-binding protein HU (99 aa).

The disordered stretch occupies residues 67–86 (REGRNPKTGAKMKIDAYNQP).

It belongs to the bacterial histone-like protein family. In terms of assembly, homodimer.

Histone-like DNA-binding protein which is capable of wrapping DNA to stabilize it, and thus to prevent its denaturation under extreme environmental conditions. This is DNA-binding protein HU (hup) from Rickettsia felis (strain ATCC VR-1525 / URRWXCal2) (Rickettsia azadi).